The sequence spans 120 residues: Ribonuclease P protein component (120 aa).

Belongs to the RnpA family. As to quaternary structure, consists of a catalytic RNA component (M1 or rnpB) and a protein subunit.

It carries out the reaction Endonucleolytic cleavage of RNA, removing 5'-extranucleotides from tRNA precursor.. Functionally, RNaseP catalyzes the removal of the 5'-leader sequence from pre-tRNA to produce the mature 5'-terminus. It can also cleave other RNA substrates such as 4.5S RNA. The protein component plays an auxiliary but essential role in vivo by binding to the 5'-leader sequence and broadening the substrate specificity of the ribozyme. This chain is Ribonuclease P protein component, found in Thioalkalivibrio sulfidiphilus (strain HL-EbGR7).